The primary structure comprises 449 residues: MKFSSGILSLAVAASVQSVQASYHAHGHAHHHRVLNKRADPDVVTIPGPKVYAFILNGSEMSKEQVCAGIRDGRLDWSGQNHDELCGFPVGMQKGSPPACPAPSYVPSPPAAPSSPPAAPQPPSKSPETPEEPKKPEEPKKPEGPKKPEGPKTPSPKKPDGPQHPQTPTGGEGVNRPFPDGEIDCGDFPSKYGAVPVDYLGLGGYTGIQHTTLVGEVFGTIRTAIAGESCTDGAMCSYACPPGYQKSQWPEQQGSTGESVGGLACRNGKLYLTNRKLSTRLCISGVGGVHIKSTISVEISICRTDYPGTESETVPVPLPPHGHLPLTCPQAETYYFWQGKSTSAQYYVNPPGYGPAKACQWGHAGLPIGNWAPVNIGVGEKGGVKWLSMFPNRPTTTAILHMTIEIVGEGLSGKCKHKDGKYYTDTGVNEDGCTVSVLHGEATFVFSYD.

The signal sequence occupies residues 1-21 (MKFSSGILSLAVAASVQSVQA). N-linked (GlcNAc...) asparagine glycosylation is present at asparagine 57. A disordered region spans residues 96-185 (SPPACPAPSY…RPFPDGEIDC (90 aa)). A compositionally biased stretch (pro residues) spans 98-125 (PACPAPSYVPSPPAAPSSPPAAPQPPSK). Over residues 131 to 150 (EEPKKPEEPKKPEGPKKPEG) the composition is skewed to basic and acidic residues.

The protein belongs to the SUN family.

It localises to the secreted. Its subcellular location is the cell wall. Functionally, cell surface beta-glucosidase involved in cytokinesis, cell wall biogenesis, adhesion to host tissue; thus playing an important role in the host-pathogen interaction. Has hydrolytic activity on linear (1-&gt;3)-beta-D-glucans such as laminaribiose and other laminarioligosaccharides. In Arthroderma benhamiae (strain ATCC MYA-4681 / CBS 112371) (Trichophyton mentagrophytes), this protein is Probable secreted beta-glucosidase ARB_04747.